Consider the following 208-residue polypeptide: Protein-L-isoaspartate O-methyltransferase (208 aa).

Serine 59 is a catalytic residue.

Belongs to the methyltransferase superfamily. L-isoaspartyl/D-aspartyl protein methyltransferase family.

It is found in the cytoplasm. The catalysed reaction is [protein]-L-isoaspartate + S-adenosyl-L-methionine = [protein]-L-isoaspartate alpha-methyl ester + S-adenosyl-L-homocysteine. In terms of biological role, catalyzes the methyl esterification of L-isoaspartyl residues in peptides and proteins that result from spontaneous decomposition of normal L-aspartyl and L-asparaginyl residues. It plays a role in the repair and/or degradation of damaged proteins. This is Protein-L-isoaspartate O-methyltransferase from Salmonella newport (strain SL254).